Here is a 356-residue protein sequence, read N- to C-terminus: CMP-sialic acid transporter 2 (356 aa).

A compositionally biased stretch (basic and acidic residues) spans 1-24 (MEYRRVKDQESYDVVSQKDIESPG). The segment at 1–44 (MEYRRVKDQESYDVVSQKDIESPGERSLSSTSATSSLSTAGASK) is disordered. At 1 to 52 (MEYRRVKDQESYDVVSQKDIESPGERSLSSTSATSSLSTAGASKGKNSWKLK) the chain is on the cytoplasmic side. Low complexity predominate over residues 27–44 (SLSSTSATSSLSTAGASK). Residues 53–73 (SIVTLALTLLTSSQAILIVWS) traverse the membrane as a helical segment. At 74-82 (KRAGKYEYS) the chain is on the lumenal side. A helical membrane pass occupies residues 83–103 (VTTANFSVEALKCLLSLIALY). The Cytoplasmic segment spans residues 104–125 (RTWNSQGVTEDNRLSTSFDEVS). A helical membrane pass occupies residues 126 to 146 (VYPIPAILYMVKNLLQYYIFA). Residues 147 to 149 (YVD) lie on the Lumenal side of the membrane. The helical transmembrane segment at 150 to 172 (APAYQILKNLNIISTGVLYRIIL) threads the bilayer. Residues 173-175 (KKK) are Cytoplasmic-facing. A helical transmembrane segment spans residues 176–196 (LSEIQWAAFILLCAGCTTAQL). The Lumenal segment spans residues 197–211 (NPSSDHVLQTPIQGW). The helical transmembrane segment at 212–232 (VMAIVMALLSGFAGVYTEAII) threads the bilayer. The Cytoplasmic portion of the chain corresponds to 233–239 (KKRPSRN). Residues 240-260 (INVQNFWLYIFGMLFNLVAIC) traverse the membrane as a helical segment. Topologically, residues 261-277 (VQDFDAVMNKGFFHGYS) are lumenal. The helical transmembrane segment at 278–298 (FITVLMILNHALSGIAVSMVM) threads the bilayer. Residues 299-314 (KYADNIVKVYSTSVAM) lie on the Cytoplasmic side of the membrane. The helical transmembrane segment at 315-335 (LLTAVVSVFLFGFHLSLAFFL) threads the bilayer. At 336-356 (GSTVVSVSVYLHSVGKPQPQK) the chain is on the lumenal side.

Belongs to the nucleotide-sugar transporter family. CMP-Sialate:CMP antiporter (TC 2.A.7.12) subfamily. As to expression, expressed in roots, leaves and stalks.

Its subcellular location is the golgi apparatus membrane. Sugar transporter involved in the transport of CMP-sialic acid from the cytoplasm into the Golgi. May transport important nucleotide sugars such as CMP-Kdo (2-keto-3-deoxy-D-manno-octulosonic acid) in physiological conditions. The sequence is that of CMP-sialic acid transporter 2 from Oryza sativa subsp. japonica (Rice).